The primary structure comprises 517 residues: Tyrosine 3-monooxygenase (517 aa).

A Phosphoserine; by PKA modification is found at Ser-33. Fe cation-binding residues include His-345, His-350, and Glu-390.

The protein belongs to the biopterin-dependent aromatic amino acid hydroxylase family. It depends on Fe(2+) as a cofactor.

Its subcellular location is the cytoplasm. The protein localises to the perinuclear region. It localises to the cell projection. The protein resides in the axon. It catalyses the reaction (6R)-L-erythro-5,6,7,8-tetrahydrobiopterin + L-tyrosine + O2 = (4aS,6R)-4a-hydroxy-L-erythro-5,6,7,8-tetrahydrobiopterin + L-dopa. It functions in the pathway catecholamine biosynthesis; dopamine biosynthesis; dopamine from L-tyrosine: step 1/2. Phosphorylation leads to an increase in the catalytic activity. Functionally, involved in the synthesis of catecholamines, such as dopamine. Has a role in serotonin signaling. Required for normal explorative and foraging behavior. The polypeptide is Tyrosine 3-monooxygenase (cat-2) (Caenorhabditis briggsae).